The sequence spans 887 residues: Probable alpha/beta-glucosidase agdC (887 aa).

Positions 1-17 (MLRSLLLLAPMVGAAVA) are cleaved as a signal peptide. Asn171, Asn293, and Asn373 each carry an N-linked (GlcNAc...) asparagine glycan. The active-site Nucleophile is the Asp422. Glu425 is an active-site residue. The interval 457–483 (PRPLPGFPDDFQPPAASKRSVAKGSKV) is disordered. The Proton donor role is filled by Asp571. N-linked (GlcNAc...) asparagine glycosylation is found at Asn747 and Asn879.

This sequence belongs to the glycosyl hydrolase 31 family.

Its subcellular location is the secreted. It catalyses the reaction Hydrolysis of terminal, non-reducing (1-&gt;4)-linked alpha-D-glucose residues with release of alpha-D-glucose.. It carries out the reaction Hydrolysis of terminal, non-reducing beta-D-glucosyl residues with release of beta-D-glucose.. Its function is as follows. Glucosidase involved in the degradation of cellulosic biomass. Has both alpha- and beta-glucosidase activity. The protein is Probable alpha/beta-glucosidase agdC (agdC) of Aspergillus clavatus (strain ATCC 1007 / CBS 513.65 / DSM 816 / NCTC 3887 / NRRL 1 / QM 1276 / 107).